A 756-amino-acid polypeptide reads, in one-letter code: Protein O-mannosyl-transferase 2 (756 aa).

Transmembrane regions (helical) follow at residues 64–84, 110–130, 156–176, 179–199, 203–223, 245–265, and 293–313; these read AHVPVFILALVIVLSVSTRFY, TFFFDVHPPLGKMLIGLAGYL, AFCAALGSCLPPFAFLVVLEL, SSTAALIAASLLIFDTGCITL, ILLDPILMFFIMGSVLCMVKF, CLSGSLGVKFVGLFVILLVGI, and VFGLIMLPLFLYTTIFAIHFI. MIR domains follow at residues 344–400, 410–466, and 471–528; these read PEYL…VKRL, PELV…VEVC, and GDPV…IEDH. A run of 4 helical transmembrane segments spans residues 602-622, 643-663, 672-692, and 713-733; these read PVIWWLNLLSLALFVILLTVA, LMEGGGMLFLGWLLHYLPFYI, HYFPAMMFSSMLTGITLDILL, and SVLLLGFIYSFYLFHPLSYGM.

Belongs to the glycosyltransferase 39 family. In terms of tissue distribution, widely expressed. Has particularly strong expression in ovary, testis, liver, brain, muscle, heart and eye.

It localises to the endoplasmic reticulum membrane. It carries out the reaction a di-trans,poly-cis-dolichyl beta-D-mannosyl phosphate + L-seryl-[protein] = 3-O-(alpha-D-mannosyl)-L-seryl-[protein] + a di-trans,poly-cis-dolichyl phosphate + H(+). It catalyses the reaction a di-trans,poly-cis-dolichyl beta-D-mannosyl phosphate + L-threonyl-[protein] = 3-O-(alpha-D-mannosyl)-L-threonyl-[protein] + a di-trans,poly-cis-dolichyl phosphate + H(+). It functions in the pathway protein modification; protein glycosylation. Transfers mannosyl residues to the hydroxyl group of serine or threonine residues. Coexpression of both POMT1 and POMT2 is necessary for enzyme activity, expression of either POMT1 or POMT2 alone is insufficient. This Danio rerio (Zebrafish) protein is Protein O-mannosyl-transferase 2.